The following is a 596-amino-acid chain: Phosphoenolpyruvate carboxykinase [GTP] (596 aa).

Substrate-binding positions include Arg77 and 205–207 (YGG). Positions 214 and 234 each coordinate Mn(2+). Ser256 is a substrate binding site. 257–262 (ACGKTN) is a binding site for GTP. Cys258 is a catalytic residue. Asp283 provides a ligand contact to Mn(2+). The interval 362–388 (KKGSTEKAAHPNSRFTAPAKNNPAISP) is disordered. 373–375 (NSR) provides a ligand contact to substrate. Residues Arg375, Arg406, and 499–502 (YGDN) contribute to the GTP site.

This sequence belongs to the phosphoenolpyruvate carboxykinase [GTP] family. Monomer. Mn(2+) is required as a cofactor.

It is found in the cytoplasm. The catalysed reaction is oxaloacetate + GTP = phosphoenolpyruvate + GDP + CO2. The protein operates within carbohydrate biosynthesis; gluconeogenesis. Its function is as follows. Catalyzes the conversion of oxaloacetate (OAA) to phosphoenolpyruvate (PEP), the rate-limiting step in the metabolic pathway that produces glucose from lactate and other precursors derived from the citric acid cycle. The polypeptide is Phosphoenolpyruvate carboxykinase [GTP] (Anaeromyxobacter dehalogenans (strain 2CP-1 / ATCC BAA-258)).